The following is a 375-amino-acid chain: Queuine tRNA-ribosyltransferase (375 aa).

Residue Asp89 is the Proton acceptor of the active site. Residues 89–93 (DSGGF), Asp143, Gln187, and Gly214 each bind substrate. An RNA binding region spans residues 245–251 (GVGKPED). The active-site Nucleophile is the Asp264. Residues 269 to 273 (TRNAR) are RNA binding; important for wobble base 34 recognition. Zn(2+) is bound by residues Cys302, Cys304, Cys307, and His333.

This sequence belongs to the queuine tRNA-ribosyltransferase family. In terms of assembly, homodimer. Within each dimer, one monomer is responsible for RNA recognition and catalysis, while the other monomer binds to the replacement base PreQ1. Zn(2+) is required as a cofactor.

It carries out the reaction 7-aminomethyl-7-carbaguanine + guanosine(34) in tRNA = 7-aminomethyl-7-carbaguanosine(34) in tRNA + guanine. It functions in the pathway tRNA modification; tRNA-queuosine biosynthesis. Catalyzes the base-exchange of a guanine (G) residue with the queuine precursor 7-aminomethyl-7-deazaguanine (PreQ1) at position 34 (anticodon wobble position) in tRNAs with GU(N) anticodons (tRNA-Asp, -Asn, -His and -Tyr). Catalysis occurs through a double-displacement mechanism. The nucleophile active site attacks the C1' of nucleotide 34 to detach the guanine base from the RNA, forming a covalent enzyme-RNA intermediate. The proton acceptor active site deprotonates the incoming PreQ1, allowing a nucleophilic attack on the C1' of the ribose to form the product. After dissociation, two additional enzymatic reactions on the tRNA convert PreQ1 to queuine (Q), resulting in the hypermodified nucleoside queuosine (7-(((4,5-cis-dihydroxy-2-cyclopenten-1-yl)amino)methyl)-7-deazaguanosine). The chain is Queuine tRNA-ribosyltransferase from Salmonella paratyphi A (strain ATCC 9150 / SARB42).